The sequence spans 356 residues: Phosphate acyltransferase (356 aa).

It belongs to the PlsX family. As to quaternary structure, homodimer. Probably interacts with PlsY.

It is found in the cytoplasm. It carries out the reaction a fatty acyl-[ACP] + phosphate = an acyl phosphate + holo-[ACP]. It participates in lipid metabolism; phospholipid metabolism. In terms of biological role, catalyzes the reversible formation of acyl-phosphate (acyl-PO(4)) from acyl-[acyl-carrier-protein] (acyl-ACP). This enzyme utilizes acyl-ACP as fatty acyl donor, but not acyl-CoA. The chain is Phosphate acyltransferase from Bartonella bacilliformis (strain ATCC 35685 / KC583 / Herrer 020/F12,63).